A 165-amino-acid chain; its full sequence is Small ribosomal subunit protein uS5 (165 aa).

Positions Leu13–Ile76 constitute an S5 DRBM domain.

Belongs to the universal ribosomal protein uS5 family. As to quaternary structure, part of the 30S ribosomal subunit. Contacts proteins S4 and S8.

Its function is as follows. With S4 and S12 plays an important role in translational accuracy. In terms of biological role, located at the back of the 30S subunit body where it stabilizes the conformation of the head with respect to the body. This is Small ribosomal subunit protein uS5 from Chlamydia felis (strain Fe/C-56) (Chlamydophila felis).